The chain runs to 165 residues: Neurotrophin-3 (165 aa).

The signal sequence occupies residues 1–3; that stretch reads IQS. Positions 4–119 are excised as a propeptide; it reads TSMDQGSLSE…VLNQTSRRKR (116 aa). Asn-112 is a glycosylation site (N-linked (GlcNAc...) asparagine).

Belongs to the NGF-beta family.

The protein resides in the secreted. Its function is as follows. Seems to promote the survival of visceral and proprioceptive sensory neurons. In Morelia spilota (Carpet python), this protein is Neurotrophin-3 (NTF3).